The primary structure comprises 120 residues: Large ribosomal subunit protein eL18 (120 aa).

Belongs to the eukaryotic ribosomal protein eL18 family.

The sequence is that of Large ribosomal subunit protein eL18 from Pyrococcus abyssi (strain GE5 / Orsay).